The primary structure comprises 1325 residues: ATP-binding cassette sub-family C member 4 (1325 aa).

In terms of domain architecture, ABC transmembrane type-1 1 spans 92-377; that stretch reads YLVLGIFTLI…FFPSAIERVS (286 aa). Helical transmembrane passes span 93 to 113, 136 to 156, 207 to 227, 228 to 248, 328 to 348, 351 to 371, and 440 to 460; these read LVLG…PIFL, AYAT…HLYF, QVTV…AVTA, LLWM…IILL, SKII…VITA, VFVA…FFPS, and LLAV…AVLG. An ABC transporter 1 domain is found at 410-633; it reads VHVQDFTAFW…GIDFGSLLKK (224 aa). 445–452 contacts ATP; it reads GPVGAGKS. Phosphothreonine occurs at positions 646 and 648. The span at 657–667 shows a compositional bias: low complexity; that stretch reads SSVWSQQSSRP. Residues 657 to 688 are disordered; it reads SSVWSQQSSRPSLKDGALESQDTENVPVTLSE. Phosphoserine is present on residues S664 and S668. Residues 710-730 traverse the membrane as a helical segment; sequence HWIVFIFLILLNTAAQVAYVL. One can recognise an ABC transmembrane type-1 2 domain in the interval 714 to 1005; it reads FIFLILLNTA…CVRQSAEVEN (292 aa). N-linked (GlcNAc...) asparagine glycosylation is found at N746 and N754. Helical transmembrane passes span 771–791, 836–856, 858–878, 954–974, 977–997, and 1038–1058; these read LTVA…YVLV, LPLT…VVSV, VAVI…FIFL, AICA…AKTL, GQVG…QWCV, and EGVI…PLVL. Positions 1041–1274 constitute an ABC transporter 2 domain; the sequence is IIFDNVNFMY…KESLFYKMVQ (234 aa). 1075-1082 contributes to the ATP binding site; it reads GRTGAGKS. The PDZ-binding signature appears at 1322–1325; sequence ETAL.

It belongs to the ABC transporter superfamily. ABCC family. Conjugate transporter (TC 3.A.1.208) subfamily. As to quaternary structure, interacts (via PDZ-binding motif) with SNX27 (via PDZ domain); this interaction accelerates MRP4 internalization. Mg(2+) serves as cofactor. N-glycosylated; leading to substrate-selective effects on its transport activity. As to expression, widely expressed, with particularly high levels in prostate, but is barely detectable in liver. sinusoidal membrane of hepatocytes.

It localises to the basolateral cell membrane. The protein localises to the apical cell membrane. It catalyses the reaction ATP + H2O + xenobioticSide 1 = ADP + phosphate + xenobioticSide 2.. The enzyme catalyses an S-substituted glutathione(in) + ATP + H2O = an S-substituted glutathione(out) + ADP + phosphate + H(+). It carries out the reaction 17beta-estradiol 17-O-(beta-D-glucuronate)(in) + ATP + H2O = 17beta-estradiol 17-O-(beta-D-glucuronate)(out) + ADP + phosphate + H(+). The catalysed reaction is dehydroepiandrosterone 3-sulfate(in) + ATP + H2O = dehydroepiandrosterone 3-sulfate(out) + ADP + phosphate + H(+). It catalyses the reaction leukotriene C4(in) + ATP + H2O = leukotriene C4(out) + ADP + phosphate + H(+). The enzyme catalyses leukotriene B4(in) + ATP + H2O = leukotriene B4(out) + ADP + phosphate + H(+). It carries out the reaction urate(in) + ATP + H2O = urate(out) + ADP + phosphate + H(+). The catalysed reaction is 3',5'-cyclic GMP(in) + ATP + H2O = 3',5'-cyclic GMP(out) + ADP + phosphate + H(+). It catalyses the reaction 3',5'-cyclic AMP(in) + ATP + H2O = 3',5'-cyclic AMP(out) + ADP + phosphate + H(+). The enzyme catalyses prostaglandin E2(in) + ATP + H2O = prostaglandin E2(out) + ADP + phosphate + H(+). It carries out the reaction prostaglandin E1(in) + ATP + H2O = prostaglandin E1(out) + ADP + phosphate + H(+). The catalysed reaction is glycodeoxycholate(in) + glutathione(in) + ATP + H2O = glycodeoxycholate(out) + glutathione(out) + ADP + phosphate + H(+). It catalyses the reaction cholate(in) + glutathione(in) + ATP + H2O = cholate(out) + glutathione(out) + ADP + phosphate + H(+). The enzyme catalyses glycocholate(in) + glutathione(in) + ATP + H2O = glycocholate(out) + glutathione(out) + ADP + phosphate + H(+). It carries out the reaction taurocholate(in) + glutathione(in) + ATP + H2O = taurocholate(out) + glutathione(out) + ADP + phosphate + H(+). The catalysed reaction is glycochenodeoxycholate(in) + glutathione(in) + ATP + H2O = glycochenodeoxycholate(out) + glutathione(out) + ADP + phosphate + H(+). It catalyses the reaction taurochenodeoxycholate(in) + glutathione(in) + ATP + H2O = taurochenodeoxycholate(out) + glutathione(out) + ADP + phosphate + H(+). The enzyme catalyses glycoursodeoxycholate(in) + glutathione(in) + ATP + H2O = glycoursodeoxycholate(out) + glutathione(out) + ADP + phosphate + H(+). It carries out the reaction tauroursodeoxycholate(in) + glutathione(in) + ATP + H2O = tauroursodeoxycholate(out) + glutathione(out) + ADP + phosphate + H(+). Its activity is regulated as follows. GSH stimulates the transport of MRP4. Urate inhibits methotrexate transport but stimulates cGMP transport. Nonsteroidal anti-inflammatory drugs (NSAIDs) strongly suppress the transport of MRP4 substrates. ATP-dependent transporter of the ATP-binding cassette (ABC) family that actively extrudes physiological compounds and xenobiotics from cells. Transports a range of endogenous molecules that have a key role in cellular communication and signaling, including cyclic nucleotides such as cyclic AMP (cAMP) and cyclic GMP (cGMP), bile acids, steroid conjugates, urate, and prostaglandins. Mediates the ATP-dependent efflux of glutathione conjugates such as leukotriene C4 (LTC4) and leukotriene B4 (LTB4) too. The presence of GSH is necessary for the ATP-dependent transport of LTB4, whereas GSH is not required for the transport of LTC4. Mediates the cotransport of bile acids with reduced glutathione (GSH). Transports a wide range of drugs and their metabolites, including anticancer, antiviral and antibiotics molecules. Confers resistance to anticancer agents such as methotrexate. The sequence is that of ATP-binding cassette sub-family C member 4 (ABCC4) from Homo sapiens (Human).